Consider the following 368-residue polypeptide: Peptide chain release factor 2 (368 aa).

Position 250 is an N5-methylglutamine (glutamine 250).

The protein belongs to the prokaryotic/mitochondrial release factor family. In terms of processing, methylated by PrmC. Methylation increases the termination efficiency of RF2.

It is found in the cytoplasm. Its function is as follows. Peptide chain release factor 2 directs the termination of translation in response to the peptide chain termination codons UGA and UAA. This Chlamydia trachomatis serovar L2 (strain ATCC VR-902B / DSM 19102 / 434/Bu) protein is Peptide chain release factor 2.